The following is a 388-amino-acid chain: tRNA-specific adenosine deaminase 1 (388 aa).

In terms of domain architecture, A to I editase spans 63–388 (CLATGVKCTP…PNGGNEFQWI (326 aa)). Position 89 (His-89) interacts with Zn(2+). Glu-91 functions as the Proton donor in the catalytic mechanism. Arg-96 is a 1D-myo-inositol hexakisphosphate binding site. Residues Cys-144 and Cys-201 each coordinate Zn(2+). Positions 204, 357, and 363 each coordinate 1D-myo-inositol hexakisphosphate.

It belongs to the ADAT1 family. Requires 1D-myo-inositol hexakisphosphate as cofactor. Zn(2+) serves as cofactor.

It is found in the cytoplasm. It localises to the nucleus. The enzyme catalyses adenosine(37) in tRNA(Ala) + H2O + H(+) = inosine(37) in tRNA(Ala) + NH4(+). In terms of biological role, deaminates adenosine-37 to inosine in tRNA-Ala. In Schizosaccharomyces pombe (strain 972 / ATCC 24843) (Fission yeast), this protein is tRNA-specific adenosine deaminase 1.